The chain runs to 341 residues: Probable GDP-mannose transporter 2 (341 aa).

Over 1-11 (MSKHKHEWTES) the chain is Cytoplasmic. The chain crosses the membrane as a helical span at residues 12–32 (VANSGPASILSYCASSILMTV). The Lumenal portion of the chain corresponds to 33–46 (TNKFVVNLDNFNMN). The helical transmembrane segment at 47–67 (FVMLFVQSLVCTVTLCILRIV) threads the bilayer. Residues 68-85 (GVANFRSLNRTDVKNWFP) are Cytoplasmic-facing. A helical transmembrane segment spans residues 86–106 (ISLLLVLMIYTSLKSLQYLAV). A topological domain (lumenal) is located at residue Pro-107. Residues 108-128 (IYTIFKNLTIILIAYGEVLFF) form a helical membrane-spanning segment. Over 129–139 (GGKVTSMELTS) the chain is Cytoplasmic. Residues 140 to 160 (FIMMVLSSVVATWGDQQAIAI) form a helical membrane-spanning segment. The Lumenal segment spans residues 161 to 176 (KASSLEDLDQELVEST). The chain crosses the membrane as a helical span at residues 177–197 (IFVLNPGYLWMFTNCISSALF). The Cytoplasmic portion of the chain corresponds to 198–214 (VLIMRKRIRLTNFKDYD). The chain crosses the membrane as a helical span at residues 215–235 (TMFYNNVLALPLLLVFSFIME). The Lumenal segment spans residues 236–251 (DWSTKNLSVNLSADSL). N-linked (GlcNAc...) asparagine glycans are attached at residues Asn-241 and Asn-245. Residues 252 to 272 (AAMVISGLMSVGISYCSGWCV) traverse the membrane as a helical segment. Residues 273 to 278 (RVTSST) lie on the Cytoplasmic side of the membrane. Residues 279–299 (TYSMVGALNKLPIALAGLVFF) traverse the membrane as a helical segment. Residues 300–303 (DAPK) lie on the Lumenal side of the membrane. A helical transmembrane segment spans residues 304-324 (NFLSFFSIFLGFLSGLLYAVA). The Cytoplasmic portion of the chain corresponds to 325 to 341 (KQKKIQQQKVLAATLEK).

It belongs to the TPT transporter family. SLC35D subfamily.

The protein localises to the golgi apparatus membrane. It localises to the cytoplasmic vesicle membrane. It is found in the endoplasmic reticulum membrane. In terms of biological role, involved in the import of GDP-mannose from the cytoplasm into the Golgi lumen. This is Probable GDP-mannose transporter 2 (HVG1) from Saccharomyces cerevisiae (strain Lalvin EC1118 / Prise de mousse) (Baker's yeast).